The chain runs to 1309 residues: Clustered mitochondria protein homolog (1309 aa).

Residues 1 to 34 form a disordered region; the sequence is MLLNGDCPESLKKEAAAAEPPRENGLDEAGPGDE. The segment covering 9-25 has biased composition (basic and acidic residues); the sequence is ESLKKEAAAAEPPRENG. Residues Ser-279 and Ser-281 each carry the phosphoserine modification. In terms of domain architecture, Clu spans 335–577; it reads RAEDAYTSRL…RTFPPDLNFL (243 aa). Polar residues predominate over residues 636 to 651; sequence LETPSSLENGGPSSLE. The interval 636–674 is disordered; the sequence is LETPSSLENGGPSSLESKSEDPPGQEAGSEEEGSSASGL. Residues Ser-654, Ser-664, and Ser-723 each carry the phosphoserine modification. 4 TPR repeats span residues 978–1011, 1020–1053, 1104–1137, and 1146–1179; these read AFHF…FNNV, CACL…SERV, ALLD…STKY, and ALSH…YKTQ. Residues 1264-1278 are compositionally biased toward basic and acidic residues; that stretch reads HQLQEASRNRDRAEE. The tract at residues 1264 to 1309 is disordered; the sequence is HQLQEASRNRDRAEEPMATEPAPAGAPGDLGSQPPAAKDPSPSVQG. The segment covering 1279–1290 has biased composition (low complexity); the sequence is PMATEPAPAGAP.

This sequence belongs to the CLU family.

Its subcellular location is the cytoplasm. It localises to the cytoplasmic granule. MRNA-binding protein involved in proper cytoplasmic distribution of mitochondria. Specifically binds mRNAs of nuclear-encoded mitochondrial proteins in the cytoplasm and regulates transport or translation of these transcripts close to mitochondria, playing a role in mitochondrial biogenesis. The chain is Clustered mitochondria protein homolog (CLUH) from Homo sapiens (Human).